The chain runs to 145 residues: Large ribosomal subunit protein uL15 (145 aa).

The segment at 1 to 52 is disordered; it reads MKLNTIAPAEGSKKDRRRVGRGIGSGFGKTAGRGHKGQHARSGGYHKVGFEG. Gly residues predominate over residues 21 to 31; that stretch reads RGIGSGFGKTA.

Belongs to the universal ribosomal protein uL15 family. In terms of assembly, part of the 50S ribosomal subunit.

Its function is as follows. Binds to the 23S rRNA. This chain is Large ribosomal subunit protein uL15, found in Acidithiobacillus ferrooxidans (strain ATCC 53993 / BNL-5-31) (Leptospirillum ferrooxidans (ATCC 53993)).